Consider the following 521-residue polypeptide: Bifunctional purine biosynthesis protein PurH (521 aa).

One can recognise an MGS-like domain in the interval 1-145 (MIKQALISVS…KNHRDVTVVV (145 aa)).

The protein belongs to the PurH family.

The enzyme catalyses (6R)-10-formyltetrahydrofolate + 5-amino-1-(5-phospho-beta-D-ribosyl)imidazole-4-carboxamide = 5-formamido-1-(5-phospho-D-ribosyl)imidazole-4-carboxamide + (6S)-5,6,7,8-tetrahydrofolate. It carries out the reaction IMP + H2O = 5-formamido-1-(5-phospho-D-ribosyl)imidazole-4-carboxamide. It functions in the pathway purine metabolism; IMP biosynthesis via de novo pathway; 5-formamido-1-(5-phospho-D-ribosyl)imidazole-4-carboxamide from 5-amino-1-(5-phospho-D-ribosyl)imidazole-4-carboxamide (10-formyl THF route): step 1/1. The protein operates within purine metabolism; IMP biosynthesis via de novo pathway; IMP from 5-formamido-1-(5-phospho-D-ribosyl)imidazole-4-carboxamide: step 1/1. This is Bifunctional purine biosynthesis protein PurH from Burkholderia pseudomallei (strain 1710b).